A 448-amino-acid chain; its full sequence is Nucleoprotein (448 aa).

The disordered stretch occupies residues 1–55; it reads MSFTPGKQSSSRASSGNRSGNGILKWADQSDQSRNVQTRGRRAQSKQTATSQQPS. The span at 9-22 shows a compositional bias: low complexity; it reads SSSRASSGNRSGNG. 2 stretches are compositionally biased toward polar residues: residues 29–38 and 45–55; these read QSDQSRNVQT and SKQTATSQQPS. Residues 52 to 194 form an RNA-binding region; it reads QQPSGGNVVP…GYYIEGSGRS (143 aa). One can recognise a CoV N NTD domain in the interval 61–190; sequence PYYSWFSGIT…VLPQGYYIEG (130 aa). RNA-binding residues include R106, R122, and R164. 2 disordered regions span residues 158–231 and 383–420; these read PADI…VTPD and QDGTMNMSPKPQRQRGQKNGQGENDNISVAAPKSRVQQ. S167 is subject to Phosphoserine; by host. T174 is modified (phosphothreonine; by host). Residue S191 is modified to Phosphoserine; by host. A compositionally biased stretch (low complexity) spans 193-223; the sequence is RSAPNSRSTSRASSRASSAGSRSRANSGNRT. Positions 259 to 384 constitute a CoV N CTD domain; sequence AKEIRQKILN…ENLNAYQQQD (126 aa). The interval 266-384 is dimerization; that stretch reads ILNKPRQKRS…ENLNAYQQQD (119 aa). Polar residues-rich tracts occupy residues 383–393 and 399–409; these read QDGTMNMSPKP and QKNGQGENDNI. The residue at position 390 (S390) is a Phosphoserine; by host. A Phosphothreonine; by host modification is found at T427.

This sequence belongs to the betacoronavirus nucleocapsid protein family. In terms of assembly, homooligomer. Both monomeric and oligomeric forms interact with RNA. Interacts with protein M. Interacts with NSP3; this interaction serves to tether the genome to the newly translated replicase-transcriptase complex at a very early stage of infection. ADP-ribosylated. The ADP-ribosylation is retained in the virion during infection. In terms of processing, phosphorylated on serine and threonine residues.

Its subcellular location is the virion. It is found in the host endoplasmic reticulum-Golgi intermediate compartment. The protein localises to the host Golgi apparatus. Its function is as follows. Packages the positive strand viral genome RNA into a helical ribonucleocapsid (RNP) and plays a fundamental role during virion assembly through its interactions with the viral genome and membrane protein M. Plays an important role in enhancing the efficiency of subgenomic viral RNA transcription as well as viral replication. The protein is Nucleoprotein of Bovine coronavirus (strain 98TXSF-110-LUN) (BCoV-LUN).